A 1091-amino-acid chain; its full sequence is Integrin alpha-6 (1091 aa).

The first 23 residues, 1–23 (MAVAGQLCLLYLSAGLLARLGTA), serve as a signal peptide directing secretion. The Extracellular segment spans residues 24 to 1011 (FNLDTREDNV…FPSKTVAQYS (988 aa)). FG-GAP repeat units lie at residues 30–95 (EDNV…GPCT), 101–166 (NDAD…IEDD), 176–229 (DGRL…FFDM), 244–300 (DHDE…KSAH), 301–363 (LLPE…KWSN), 364–419 (VKPI…GIIT), and 420–479 (KPTQ…VTPN). N78 carries an N-linked (GlcNAc...) asparagine glycan. 3 disulfides stabilise this stretch: C86–C94, C131–C154, and C175–C188. 2 N-linked (GlcNAc...) asparagine glycosylation sites follow: N223 and N284. Ca(2+) contacts are provided by D324, N326, D328, and D332. Residue N370 is glycosylated (N-linked (GlcNAc...) asparagine). Residues D386, N388, D390, Y392, D394, D441, D443, N445, Y447, and D449 each contribute to the Ca(2+) site. 4 disulfides stabilise this stretch: C489/C496, C502/C562, C626/C632, and C726/C737. Residues N731, N746, and N927 are each glycosylated (N-linked (GlcNAc...) asparagine). Cystine bridges form between C881–C928 and C934–C939. An N-linked (GlcNAc...) asparagine glycan is attached at N958. Residues 1012–1037 (GVAWWIILLAVLAGILMLALLVFLLW) form a helical membrane-spanning segment. Over 1038-1091 (KCGFFKRSRYDDSIPRYHAVRIRKEEREIKDEKHMDNLEKKQWITKWNENESYS) the chain is Cytoplasmic. The S-palmitoyl cysteine; by DHHC3 moiety is linked to residue C1039. Positions 1040-1044 (GFFKR) match the GFFKR motif motif. A Phosphoserine modification is found at R1064.

This sequence belongs to the integrin alpha chain family. In terms of assembly, heterodimer of an alpha and a beta subunit. The alpha subunit is composed of a heavy and a light chain linked by a disulfide bond. Alpha-6 associates with either beta-1 (ITGB1) or beta-4 (ITGB4) to form ITGA6:ITGB1 and ITGA6:ITGB4, respectively. ITGA6:ITGB1 is found in a complex with CD9; interaction takes place in oocytes and is involved in sperm-egg fusion. ITGA6:ITGB4 is found in a ternary complex with NRG1 and ERBB3. ITGA6:ITGB4 is found in a ternary complex with IGF1 and IGF1R. ITGA6:ITGB4 interacts with IGF2. Interacts with ADAM9. Interacts with RAB21. Interacts with MDK. ITGA6:ITGB1 interacts with MDK; this interaction mediates MDK-induced neurite outgrowth. Interacts with CD82; this interaction down-regulates ITGA6-mediated cell adhesion. Isoforms containing segment A, but not segment B, are the major targets for PMA-induced phosphorylation. Phosphorylation occurs on 'Ser-1064' of isoform alpha-6X1A. Phosphorylation is not required for the induction of integrin alpha-6A/beta-1 high affinity but may reduce the affinity for ligand. In terms of processing, undergoes PLAU-mediated cleavage at residues Arg-595-596-Arg in a time-dependent manner to produce processed integrin alpha-6 (alpha6p). Post-translationally, palmitoylation by DHHC3 enhances stability and cell surface expression. In terms of tissue distribution, expressed at low levels in normal skin tissue with elevated levels in skin tumors.

Its subcellular location is the cell membrane. Functionally, integrin alpha-6/beta-1 (ITGA6:ITGB1) is a receptor for laminin on platelets. Integrin alpha-6/beta-1 (ITGA6:ITGB1) is present in oocytes and is involved in sperm-egg fusion. Integrin alpha-6/beta-4 (ITGA6:ITGB4) is a receptor for laminin in epithelial cells and it plays a critical structural role in the hemidesmosome. ITGA6:ITGB4 binds to NRG1 (via EGF domain) and this binding is essential for NRG1-ERBB signaling. ITGA6:ITGB4 binds to IGF1 and this binding is essential for IGF1 signaling. ITGA6:ITGB4 binds to IGF2 and this binding is essential for IGF2 signaling. The protein is Integrin alpha-6 (Itga6) of Mus musculus (Mouse).